The sequence spans 1118 residues: Repetin (1118 aa).

An S-100-like region spans residues 1 to 91; it reads MPQLLNSILN…VQACHHKLDS (91 aa). EF-hand domains follow at residues 13 to 48 and 49 to 84; these read KVFQ…LRRP and NDPE…LVQA. Ca(2+)-binding residues include S27, E32, D62, D64, N66, Y68, and E73. Residues 94–1118 form a disordered region; the sequence is YGSRTSSQKE…YVQEQAAYQY (1025 aa). Basic and acidic residues predominate over residues 100–115; the sequence is SQKEHDQEGTRSHKFS. Positions 138 to 148 are enriched in polar residues; that stretch reads SEGQHQNVQHD. Basic and acidic residues-rich tracts occupy residues 149-164 and 172-186; these read QSQR…DTDP and FHGD…RQDT. Residues 237 to 252 are compositionally biased toward low complexity; it reads GQSKTSGQQSSHGQSG. Residues 259 to 299 are compositionally biased toward polar residues; that stretch reads YSSQTSQQESDSYEQYGSQHQKSGNSQTERQGQNSQYGQTN. Tandem repeats lie at residues 273-284, 285-296, 297-308, 309-320, 321-332, 333-344, 345-356, 357-368, 369-380, 381-392, 393-404, 405-416, 417-428, 429-440, 441-452, 453-464, 465-476, 477-488, 489-500, 501-512, 513-524, 525-536, 537-548, 549-560, 561-572, 573-584, 585-596, 597-608, 609-620, 621-632, 633-644, 645-656, 657-668, 669-680, 681-692, 693-704, 705-716, 717-728, 729-740, 741-752, 753-764, 765-776, 777-788, 789-800, 801-812, 813-824, 825-836, and 837-848. A 48 X 12 AA approximate tandem repeats of Q-[KT]-[GD]-[RS]-Q-[DG]-Q-S-[PS]-H-X-G region spans residues 273-848; that stretch reads QYGSQHQKSG…DRQSQSSHCG (576 aa). The interval 321-764 is 22 X 12 AA approximate tandem repeats of Q-K-G-R-Q-D-Q-S-P-H-Q-G; the sequence is QKGRKDQSFQ…GRQDQSSHQG (444 aa). 2 stretches are compositionally biased toward basic and acidic residues: residues 347 to 363 and 371 to 387; these read GRQD…RQDQ. Over residues 434–466 the composition is skewed to polar residues; that stretch reads DQSSHQGQKGRQDQSSHQGQKGRQDQSSHQGQK. A compositionally biased stretch (basic and acidic residues) spans 467-481; that stretch reads GRQDQSSHQGQREGQ. Composition is skewed to polar residues over residues 482-535 and 543-570; these read DQNS…SFHY and LSSH…QSFH. Polar residues-rich tracts occupy residues 587-606 and 616-643; these read DRQS…QSFH and GSHQ…SSQQ. Over residues 710-726 the composition is skewed to polar residues; sequence DLSSHQGQKGRQDQSPH. Composition is skewed to basic and acidic residues over residues 731–747 and 755–769; these read GRHD…RQDQ and GRQD…REGQ. 3 stretches are compositionally biased toward polar residues: residues 795-822, 833-848, and 855-864; these read LSSH…QSFH, SHHG…SHCG, and TENQGQNRHS. Residues 865–875 show a composition bias toward basic and acidic residues; that stretch reads LGTDRTRRDSY. Residues 876–889 are compositionally biased toward polar residues; the sequence is VEQSGRSVKLSQQN. Basic and acidic residues-rich tracts occupy residues 890–908, 947–965, 978–998, 1005–1045, and 1056–1065; these read SREE…RREQ, EQDH…HSVE, THEE…DEQN, QTHE…KEKY, and PNREKSHMSE.

Belongs to the S100-fused protein family. Post-translationally, potential substrate of transglutaminase. Some arginines are probably converted to citrullines by peptidylarginine deimidase. Detectable in the stratified internal epithelia of forestomach and tongue and to a lesser degree in normal skin epidermis, where it is restricted to the differentiated suprabasal cell layers. Overexpressed in skin tumors.

It localises to the secreted. The protein localises to the extracellular space. Its subcellular location is the extracellular matrix. In terms of biological role, involved in the cornified cell envelope formation. Multifunctional epidermal matrix protein. The polypeptide is Repetin (Rptn) (Mus musculus (Mouse)).